Reading from the N-terminus, the 170-residue chain is MTIKPLIILPDPVLRQQSKLIEQVDAEVLRLADDMLETMYDAPGIGLAAIQIGVPRRMLVIDVAREGEEKTPVVFINPEILKVSDDISTYEEGCLSIPDYYAEVERPASLTVQYVGRDGKQQTVEADGLLATCLQHEIDHLNGVLFIDHISRLKRDMVIKKFTKAARAKI.

Fe cation-binding residues include Cys-94 and His-136. Residue Glu-137 is part of the active site. A Fe cation-binding site is contributed by His-140.

It belongs to the polypeptide deformylase family. It depends on Fe(2+) as a cofactor.

It catalyses the reaction N-terminal N-formyl-L-methionyl-[peptide] + H2O = N-terminal L-methionyl-[peptide] + formate. Removes the formyl group from the N-terminal Met of newly synthesized proteins. Requires at least a dipeptide for an efficient rate of reaction. N-terminal L-methionine is a prerequisite for activity but the enzyme has broad specificity at other positions. This Agrobacterium fabrum (strain C58 / ATCC 33970) (Agrobacterium tumefaciens (strain C58)) protein is Peptide deformylase.